A 206-amino-acid chain; its full sequence is Small ribosomal subunit protein eS1 (206 aa).

It belongs to the eukaryotic ribosomal protein eS1 family.

The polypeptide is Small ribosomal subunit protein eS1 (Natronomonas pharaonis (strain ATCC 35678 / DSM 2160 / CIP 103997 / JCM 8858 / NBRC 14720 / NCIMB 2260 / Gabara) (Halobacterium pharaonis)).